Here is a 130-residue protein sequence, read N- to C-terminus: MKEMINVVAVGTGGFVGAASRYFISTLVNKLNTSGFPIATLIINILGSFLIGLLTQLLMSLCPDNKKLNLFLTTGILGGFTTFSTFSLETVNLFQGGKAVFGVVNIVLSIAFCLTGVVLGKMLAKTIASM.

A run of 4 helical transmembrane segments spans residues 4–24 (MINVVAVGTGGFVGAASRYFI), 35–55 (GFPIATLIINILGSFLIGLLT), 68–88 (LNLFLTTGILGGFTTFSTFSL), and 99–119 (AVFGVVNIVLSIAFCLTGVVL). Na(+)-binding residues include Gly-78 and Thr-81.

This sequence belongs to the fluoride channel Fluc/FEX (TC 1.A.43) family.

It localises to the cell membrane. It carries out the reaction fluoride(in) = fluoride(out). Its activity is regulated as follows. Na(+) is not transported, but it plays an essential structural role and its presence is essential for fluoride channel function. Functionally, fluoride-specific ion channel. Important for reducing fluoride concentration in the cell, thus reducing its toxicity. This chain is Fluoride-specific ion channel FluC, found in Ruminiclostridium cellulolyticum (strain ATCC 35319 / DSM 5812 / JCM 6584 / H10) (Clostridium cellulolyticum).